The primary structure comprises 352 residues: S-adenosylmethionine:tRNA ribosyltransferase-isomerase (352 aa).

The protein belongs to the QueA family. Monomer.

It localises to the cytoplasm. The catalysed reaction is 7-aminomethyl-7-carbaguanosine(34) in tRNA + S-adenosyl-L-methionine = epoxyqueuosine(34) in tRNA + adenine + L-methionine + 2 H(+). It functions in the pathway tRNA modification; tRNA-queuosine biosynthesis. Functionally, transfers and isomerizes the ribose moiety from AdoMet to the 7-aminomethyl group of 7-deazaguanine (preQ1-tRNA) to give epoxyqueuosine (oQ-tRNA). This chain is S-adenosylmethionine:tRNA ribosyltransferase-isomerase, found in Paraburkholderia phytofirmans (strain DSM 17436 / LMG 22146 / PsJN) (Burkholderia phytofirmans).